The chain runs to 332 residues: Heterogeneous nuclear ribonucleoprotein A/B (332 aa).

The disordered stretch occupies residues 1–66 (MSEAGEEQPM…DQINASKNEE (66 aa)). Positions 29 to 49 (GRGWTGAAAGAGGATAAPPSG) are enriched in low complexity. 2 consecutive RRM domains span residues 69–154 (GKMF…PVKK) and 153–233 (KKIF…QPKE). Phosphoserine is present on S81. Glycyl lysine isopeptide (Lys-Gly) (interchain with G-Cter in SUMO2) cross-links involve residues K130 and K203. At K215 the chain carries N6-acetyllysine. The segment at 235-268 (YQQQQYGSGGRGNRNRGNRGSGGGGGGGGQSQSW) is disordered. S242 carries the phosphoserine modification. At R245 the chain carries Dimethylated arginine; alternate. R245 carries the omega-N-methylarginine; alternate modification. Omega-N-methylarginine is present on residues R250, G251, R253, and G254. A compositionally biased stretch (gly residues) spans 253–264 (RGSGGGGGGGGQ). S255 and G256 each carry phosphoserine. An N6-acetyllysine mark is found at G271, Y272, and K318. Residues 311–332 (QGSTNYGKSQRRGGHQNNYKPY) form a disordered region. Position 322 is a dimethylated arginine; alternate (R322). An Omega-N-methylarginine; alternate modification is found at R322. Position 322 is an asymmetric dimethylarginine; alternate (R322).

As to quaternary structure, identified in a IGF2BP1-dependent mRNP granule complex containing untranslated mRNAs. Interacts with APOBEC1. In terms of processing, dimethylation at Arg-322 is probably asymmetric. Ubiquitous.

The protein resides in the nucleus. Its subcellular location is the cytoplasm. Its function is as follows. Binds single-stranded RNA. Has a high affinity for G-rich and U-rich regions of hnRNA. Also binds to APOB mRNA transcripts around the RNA editing site. The protein is Heterogeneous nuclear ribonucleoprotein A/B (HNRNPAB) of Homo sapiens (Human).